The primary structure comprises 164 residues: S-ribosylhomocysteine lyase (164 aa).

Fe cation is bound by residues His-54, His-58, and Cys-128.

The protein belongs to the LuxS family. As to quaternary structure, homodimer. Fe cation is required as a cofactor.

The catalysed reaction is S-(5-deoxy-D-ribos-5-yl)-L-homocysteine = (S)-4,5-dihydroxypentane-2,3-dione + L-homocysteine. Functionally, involved in the synthesis of autoinducer 2 (AI-2) which is secreted by bacteria and is used to communicate both the cell density and the metabolic potential of the environment. The regulation of gene expression in response to changes in cell density is called quorum sensing. Catalyzes the transformation of S-ribosylhomocysteine (RHC) to homocysteine (HC) and 4,5-dihydroxy-2,3-pentadione (DPD). This is S-ribosylhomocysteine lyase from Campylobacter jejuni subsp. doylei (strain ATCC BAA-1458 / RM4099 / 269.97).